We begin with the raw amino-acid sequence, 201 residues long: Ras-related protein Rab-9A (201 aa).

The residue at position 2 (Ala2) is an N-acetylalanine. Residue Gly17 participates in GDP binding. Gly17, Val18, Gly19, Lys20, Ser21, Ser22, Thr34, His38, and Thr39 together coordinate GTP. Positions 19, 20, 21, and 22 each coordinate GDP. Position 21 (Ser21) interacts with Mg(2+). A Switch 1 motif is present at residues 31–42 (KFDTQLFHTIGV). 2 residues coordinate Mg(2+): Thr39 and Asp62. The short motif at 64–78 (AGQERFRSLRTPFYR) is the Switch 2 element. GTP is bound by residues Gly65, Asn124, Lys125, and Asp127. Asn124, Lys125, Asp127, Ala155, and Lys156 together coordinate GDP. Lys156 serves as a coordination point for GTP. Ser179 is subject to Phosphoserine. Phosphothreonine is present on Thr187. 2 S-geranylgeranyl cysteine lipidation sites follow: Cys200 and Cys201.

It belongs to the small GTPase superfamily. Rab family. In terms of assembly, interacts (preferentially in its GTP-bound form) with GCC2 (via its GRIP domain). Interacts (GTP-bound form) with SGSM1; the GDP-bound form has much lower affinity for SGSM1. Interacts with SGSM2. The GTP-bound form but not the GDP-bound form interacts with HPS4 and the BLOC-3 complex (heterodimer of HPS1 and HPS4) but does not interact with HPS1 alone. Interacts (GTP-bound form) with NDE1; two RAB9A-GTP molecules lie on the opposite sides of the NDE1 homodimer; the interaction leads to RAB9A-dynein motor tethering. Interacts (GTP-bound form) with NDEL1. Mg(2+) serves as cofactor.

The protein localises to the cell membrane. It is found in the endoplasmic reticulum membrane. Its subcellular location is the golgi apparatus membrane. The protein resides in the late endosome. It localises to the cytoplasmic vesicle. The protein localises to the phagosome membrane. It is found in the phagosome. Its subcellular location is the cytoplasmic vesicle membrane. The protein resides in the melanosome. The catalysed reaction is GTP + H2O = GDP + phosphate + H(+). Regulated by guanine nucleotide exchange factors (GEFs) which promote the exchange of bound GDP for free GTP. Regulated by GTPase activating proteins (GAPs) which increase the GTP hydrolysis activity. Inhibited by GDP dissociation inhibitors (GDIs). Functionally, the small GTPases Rab are key regulators of intracellular membrane trafficking, from the formation of transport vesicles to their fusion with membranes. Rabs cycle between an inactive GDP-bound form and an active GTP-bound form that is able to recruit to membranes different sets of downstream effectors directly responsible for vesicle formation, movement, tethering and fusion. RAB9A is involved in the transport of proteins between the endosomes and the trans-Golgi network (TGN). Specifically uses NDE1/NDEL1 as an effector to interact with the dynein motor complex in order to control retrograde trafficking of RAB9-associated late endosomes to the TGN. Involved in the recruitment of SGSM2 to melanosomes and is required for the proper trafficking of melanogenic enzymes TYR, TYRP1 and DCT/TYRP2 to melanosomes in melanocytes. The sequence is that of Ras-related protein Rab-9A (RAB9A) from Canis lupus familiaris (Dog).